Reading from the N-terminus, the 199-residue chain is Probable cobalt-precorrin-6B C(15)-methyltransferase (decarboxylating) (199 aa).

S-adenosyl-L-methionine-binding positions include threonine 24, 48–52, aspartate 72, and alanine 101; that span reads GCGTG.

This sequence belongs to the methyltransferase superfamily. Archaeal-type CbiT family.

It catalyses the reaction Co-precorrin-6B + S-adenosyl-L-methionine = Co-precorrin-7 + S-adenosyl-L-homocysteine + CO2. The protein operates within cofactor biosynthesis; adenosylcobalamin biosynthesis; cob(II)yrinate a,c-diamide from sirohydrochlorin (anaerobic route): step 8/10. Catalyzes the methylation of C-15 in cobalt-precorrin-6B followed by the decarboxylation of C-12 to form cobalt-precorrin-7. The sequence is that of Probable cobalt-precorrin-6B C(15)-methyltransferase (decarboxylating) from Saccharolobus solfataricus (strain ATCC 35092 / DSM 1617 / JCM 11322 / P2) (Sulfolobus solfataricus).